We begin with the raw amino-acid sequence, 593 residues long: MNKLYIGNLSENVSPPDLESLFKESKIPFTGQFLVKSGYAFVDCPDETWAMKAIDTLSGKVELHGKVIEVEHSVPKRQRSRKLQIRNIPPHLQWEVLDSLLAQYGTVENCEQVNTDSETAVVNVTYANKEHARQGLEKLNGYQLENYSLKVTYIPDEMATPQSPSQQLQQPQQQHPQGRRGFGQRGPARQGSPGAAARPKPQSEVPLRMLVPTQFVGAIIGKEGATIRNITKQTQSKIDIHRKENAGAAEKPITIHSTPEGCSAACKIIMEIMQKEAQDTKFTEEIPLKILAHNNFVGRLIGKEGRNLKKIEQDTDTKITISPLQDLTLYNPERTITVKGSIETCAKAEEEVMKKIRESYENDIAAMNLQAHLIPGLNLNALGLFPPSSSGMPPPSAGVSSPTTSASYPPFGQQPESETVHLFIPALAVGAIIGKQGQHIKQLSRFAGASIKIAPAEGPDAKLRMVIITGPPEAQFKAQGRIYGKLKEENFFGPKEEVKLEAHIKVPSYAAGRVIGKGGKTVNELQNLTSAEVVVPRDQTPDENDQVVVKITGHFYASQLAQRKIQEILAQVRRQQQQQQKTAQSGQPQPRRK.

RRM domains follow at residues 2-75 and 81-156; these read NKLY…HSVP and RKLQ…YIPD. The tract at residues 159 to 208 is disordered; sequence ATPQSPSQQLQQPQQQHPQGRRGFGQRGPARQGSPGAAARPKPQSEVPLR. Over residues 161–176 the composition is skewed to low complexity; the sequence is PQSPSQQLQQPQQQHP. 2 KH domains span residues 204–269 and 285–352; these read EVPL…CKII and EIPL…EEEV. Residues 390-402 show a composition bias toward low complexity; the sequence is SGMPPPSAGVSSP. Residues 390–412 are disordered; sequence SGMPPPSAGVSSPTTSASYPPFG. 2 consecutive KH domains span residues 417–482 and 499–565; these read SETV…QGRI and KLEA…QRKI. Positions 571–593 are disordered; sequence QVRRQQQQQQKTAQSGQPQPRRK.

Belongs to the RRM IMP/VICKZ family. Homodimer and multimer. Associates with microtubules. Interaction with a translocation machinery protein TRAPA of the endoplasmic reticulum. Component of a mRNP complex, at least composed of DAZAP1, IGF2BP3, STAU and VgRBP60. The mRNP complex with DAZAP1, IGF2BP3, STAU and VgRBP60 is only found in the cytoplasm. Interacts with a hnRNP 1 related RNA transport protein VgRBP60 both in the nucleus (in an RNA-independent manner) and the cytoplasm (in an RNA-dependent manner). Found in a B3 activator complex. As to expression, expressed in oocytes, kidney and pancreas (at protein level). Expressed in oocytes, kidney and pancreas.

Its subcellular location is the nucleus. The protein resides in the cytoplasm. The protein localises to the endoplasmic reticulum. RNA-binding protein that acts as a regulator of mRNA transport and localization. Binds to the RNA sequence motif 5'-UUCAC-3'. Preferentially binds to N6-methyladenosine (m6A)-containing mRNAs and increases their stability. Mediates the specific association of Vg1 RNA to microtubules. May regulate mRNA translation. Binds specifically to the vegetal localization elements (VLE or VgLE) in the 3'-UTR of Vg1 and VegT mRNAs. Binds to the Vg1 and VegT mRNAs in both the nucleus and the cytoplasm. May regulate mRNA translation. Acts as a transcription regulator. Binds to the 5'-[TA]GGTTACT-3' motif within element 3 of the TFIIIA gene promoter. This chain is Insulin-like growth factor 2 mRNA-binding protein 3-B (igf2bp3-b), found in Xenopus laevis (African clawed frog).